The following is a 217-amino-acid chain: Somatotropin (217 aa).

Residues 1 to 24 form the signal peptide; it reads MAAGSWTSLLLAFTLLCLPQLREA. Position 44 (His44) interacts with Zn(2+). Cysteines 79 and 191 form a disulfide. Ser132 bears the Phosphoserine mark. Glu200 serves as a coordination point for Zn(2+). Cys208 and Cys215 are disulfide-bonded.

This sequence belongs to the somatotropin/prolactin family.

It localises to the secreted. Functionally, plays an important role in growth control. Its major role in stimulating body growth is to stimulate the liver and other tissues to secrete IGF1. It stimulates both the differentiation and proliferation of myoblasts. It also stimulates amino acid uptake and protein synthesis in muscle and other tissues. The polypeptide is Somatotropin (GH1) (Callithrix jacchus (White-tufted-ear marmoset)).